The primary structure comprises 78 residues: Large ribosomal subunit protein bL28 (78 aa).

The protein belongs to the bacterial ribosomal protein bL28 family.

This Pasteurella multocida (strain Pm70) protein is Large ribosomal subunit protein bL28.